We begin with the raw amino-acid sequence, 312 residues long: uncharacterized protein (312 aa).

It belongs to the asfivirus CP312R family.

The protein localises to the virion. This is an uncharacterized protein from African swine fever virus (strain Badajoz 1971 Vero-adapted) (Ba71V).